The sequence spans 219 residues: Ribosome maturation factor RimP (219 aa).

2 disordered regions span residues 1-38 (MTQRGRAAKPTGPTGRPRRTGGQRGTDRVGRGGDLATR) and 189-219 (VEFTRPGEPDAFDGTDEAGDFDDDDVEDEER). Residues 198 to 219 (DAFDGTDEAGDFDDDDVEDEER) are compositionally biased toward acidic residues.

The protein belongs to the RimP family.

The protein localises to the cytoplasm. Its function is as follows. Required for maturation of 30S ribosomal subunits. The chain is Ribosome maturation factor RimP from Salinispora arenicola (strain CNS-205).